A 148-amino-acid chain; its full sequence is Large ribosomal subunit protein bL9 (148 aa).

The protein belongs to the bacterial ribosomal protein bL9 family.

In terms of biological role, binds to the 23S rRNA. This chain is Large ribosomal subunit protein bL9, found in Aeromonas salmonicida (strain A449).